We begin with the raw amino-acid sequence, 191 residues long: Lipoprotein signal peptidase (191 aa).

Transmembrane regions (helical) follow at residues 26–46, 84–104, and 110–130; these read VWFP…LKAW, AVPL…YLLW, and FLTV…IDGL. Catalysis depends on residues aspartate 137 and aspartate 163. A helical membrane pass occupies residues 156 to 176; it reads FPIFNIADMCVVGGTILLLVA.

This sequence belongs to the peptidase A8 family.

The protein localises to the cell membrane. It catalyses the reaction Release of signal peptides from bacterial membrane prolipoproteins. Hydrolyzes -Xaa-Yaa-Zaa-|-(S,diacylglyceryl)Cys-, in which Xaa is hydrophobic (preferably Leu), and Yaa (Ala or Ser) and Zaa (Gly or Ala) have small, neutral side chains.. It functions in the pathway protein modification; lipoprotein biosynthesis (signal peptide cleavage). Functionally, this protein specifically catalyzes the removal of signal peptides from prolipoproteins. The protein is Lipoprotein signal peptidase of Deinococcus radiodurans (strain ATCC 13939 / DSM 20539 / JCM 16871 / CCUG 27074 / LMG 4051 / NBRC 15346 / NCIMB 9279 / VKM B-1422 / R1).